The sequence spans 1389 residues: MAGAARGLLWAALSLCLLPEPLRAAHIKKAEAAAAGGGGGVGGELRYLHAAELGQALRDLVAEAPPGLARLFSIGRSVEGRPLWVLRLTAGLPELPEARQDGEKKKKEEEEEEEEEEGEEGGGGALPGRPQVKLVGNMHGDEPLARPLLLRLAQELVRGWAGGDERLGRLLNTTDLYLLPSLNPDGFERAREGDCGGGGGGGGEGGGEPGGRENSRGRDLNRSFPDQFGSAQPDLEPVPEVRALIAWMRRNKFLLSGNLHGGSVVASYPYDDSPTHRPTGVYSKSADDEVFKYLAKAYASHHPIMRTGKPNCPGEEGETFQDGITNGAQWYDVEGGMQDYNYVWANCFEITLELSCCKYPPTSELQQEWENNRESLLTFIEKVHIGVKGFVRDAITGAGLENATIVVAGIAHNITAGKFGDYHRLLVPGTYNVTAVVMGYAPVTKENIEVKEADATVVDFSLQPTVVAPDPNLTQFTATPAPPSTLTPSVAQVEPPATTSLHQAVQPVDFRHHHFSDMEIFLRRYANEYPSITRLYSVGKSVELRELYVMEISDNPGIHEAGEPEFKYIGNMHGNEVVGRELLLNLIEYLCKNFGTDPEVTDLVQSTRIHIMPSMNPDGYEKSQEGDRGGTVGRNNSNNYDLNRNFPDQFFQVTDPPQPETLAVMSWLKTYPFVLSANLHGGSLVVNYPFDDDEQGIAIYSKSPDDAVFQQLALSYSKENKKMYQGSPCKDLYPTEYFPHGITNGAQWYNVPGGMQDWNYLNTNCFEVTIELGCVKYPKAEELPKYWEQNRRSLLQFIKQVHRGIWGFVLDATDGRGILNATISVADINHPVTTYKDGDYWRLLVQGTYKVTASARGYDPVTKTVEVDSKGGVQVNFTLSRTDAKVEEGKVPVLNTPDTSDPNEKEFETLIKDLSAENGLERLLLASSGKVSPYRYRPYKDLSEFLRGLYLNYPHITNLTSLGQSVEFRQIWSLEISNKPNHSEPEEPKIRFVAGIHGNAPVGTELLLALAEFLCMNYKKNSAVTKLIDRTRIVIVPSLNPDGREIAQERGCTSKLGHANAHGRDLDTDFTSNYSWYSGTREPETKAIIENLILKQDFSLSVALDGGSLLVTYPFDKPAQTVENKETLKHLASVYANNHPLMHLGQPGCPNKSDENIPGGVIRGSEWHSHLGSMKDFSVTFGHCPEITVYTSCCYFPSAGQLPGLWADHRKSLLSMLVEVHKGVHGFVQDKSGKAISKATIVLNEGLRVYTKEGGYFHVLLAPGLHNINAIADGYQQKHMKVLVRHDAPSSVFIVFDMENRIFGLPRELVVTVAGASMSALVLTACIIWCVCSIKSNRHKDGFPTLRQHHDDYEDEIRMMSTGSKKSLLSHEFQDETDTEEETLYSSKH.

The first 25 residues, 1–25, serve as a signal peptide directing secretion; sequence MAGAARGLLWAALSLCLLPEPLRAA. Topologically, residues 26 to 1308 are extracellular; it reads HIKKAEAAAA…ENRIFGLPRE (1283 aa). The 338-residue stretch at 46–383 folds into the Peptidase M14 1 domain; sequence RYLHAAELGQ…ESLLTFIEKV (338 aa). Residues 95–133 are disordered; sequence LPEARQDGEKKKKEEEEEEEEEEGEEGGGGALPGRPQVK. The span at 96 to 108 shows a compositional bias: basic and acidic residues; it reads PEARQDGEKKKKE. Positions 109 to 120 are enriched in acidic residues; that stretch reads EEEEEEEEEGEE. Zn(2+) is bound by residues His-139 and Glu-142. Asn-172 carries an N-linked (GlcNAc...) asparagine glycan. The interval 188-235 is disordered; the sequence is ERAREGDCGGGGGGGGEGGGEPGGRENSRGRDLNRSFPDQFGSAQPDL. The segment covering 195 to 209 has biased composition (gly residues); the sequence is CGGGGGGGGEGGGEP. The span at 210 to 221 shows a compositional bias: basic and acidic residues; the sequence is GGRENSRGRDLN. The N-linked (GlcNAc...) asparagine glycan is linked to Asn-221. Zn(2+) is bound at residue His-260. The active-site Proton donor/acceptor is Glu-353. N-linked (GlcNAc...) asparagine glycans are attached at residues Asn-402, Asn-413, Asn-432, and Asn-472. Residues 511 to 801 form the Peptidase M14 2 domain; that stretch reads RHHHFSDMEI…RSLLQFIKQV (291 aa). Zn(2+)-binding residues include His-573 and Glu-576. Residues 614–639 form a disordered region; the sequence is SMNPDGYEKSQEGDRGGTVGRNNSNN. The segment covering 619-628 has biased composition (basic and acidic residues); it reads GYEKSQEGDR. The N-linked (GlcNAc...) asparagine glycan is linked to Asn-635. Residue His-680 coordinates Zn(2+). The active-site Proton donor/acceptor is Glu-771. Residues Asn-820, Asn-876, Asn-958, Asn-981, Asn-1073, and Asn-1151 are each glycosylated (N-linked (GlcNAc...) asparagine). In terms of domain architecture, Peptidase M14 3 spans 935-1220; that stretch reads RYRPYKDLSE…KSLLSMLVEV (286 aa). A helical transmembrane segment spans residues 1309 to 1329; sequence LVVTVAGASMSALVLTACIIW. S-palmitoyl cysteine attachment occurs at residues Cys-1326, Cys-1330, and Cys-1332. Residues 1330–1389 are Cytoplasmic-facing; that stretch reads CVCSIKSNRHKDGFPTLRQHHDDYEDEIRMMSTGSKKSLLSHEFQDETDTEEETLYSSKH. Residues 1367–1389 are disordered; sequence SLLSHEFQDETDTEEETLYSSKH.

This sequence belongs to the peptidase M14 family. In terms of assembly, binds to pre-S, hepatitis B virus large envelope protein, via the carboxypeptidase-like domain. The cofactor is Zn(2+). The N-terminus is blocked. In terms of tissue distribution, expressed in liver, lung, kidney, heart, stomach, pancreas, spleen, gall bladder and intestine, but not in skeletal muscle.

The protein resides in the cell membrane. The catalysed reaction is Releases C-terminal Arg and Lys from polypeptides.. This is Carboxypeptidase D (CPD) from Anas platyrhynchos (Mallard).